Reading from the N-terminus, the 182-residue chain is CASP-like protein 2B1 (182 aa).

Topologically, residues Met-1 to Glu-12 are cytoplasmic. A helical transmembrane segment spans residues Leu-13–Val-31. At Thr-32–Lys-52 the chain is on the extracellular side. Residues Ala-53–Val-73 form a helical membrane-spanning segment. The Cytoplasmic portion of the chain corresponds to Arg-74–Pro-89. Residues Leu-90–Ala-110 traverse the membrane as a helical segment. The Extracellular portion of the chain corresponds to Ala-111–Gln-141. The chain crosses the membrane as a helical span at residues Met-142–Ile-162. The Cytoplasmic portion of the chain corresponds to Ser-163–Trp-182.

Belongs to the Casparian strip membrane proteins (CASP) family. In terms of assembly, homodimer and heterodimers.

It is found in the cell membrane. This Arabidopsis lyrata subsp. lyrata (Lyre-leaved rock-cress) protein is CASP-like protein 2B1.